The chain runs to 428 residues: Adenosylhomocysteinase (428 aa).

Thr62, Asp134, and Glu159 together coordinate substrate. Thr160–Thr162 provides a ligand contact to NAD(+). Substrate-binding residues include Lys189 and Asp193. NAD(+)-binding positions include Asn194, Gly223–Gly228, Glu246, Asn281, Ser302–His304, and Asn349.

This sequence belongs to the adenosylhomocysteinase family. It depends on NAD(+) as a cofactor.

The protein localises to the cytoplasm. The enzyme catalyses S-adenosyl-L-homocysteine + H2O = L-homocysteine + adenosine. Its pathway is amino-acid biosynthesis; L-homocysteine biosynthesis; L-homocysteine from S-adenosyl-L-homocysteine: step 1/1. Its function is as follows. May play a key role in the regulation of the intracellular concentration of adenosylhomocysteine. In Gloeobacter violaceus (strain ATCC 29082 / PCC 7421), this protein is Adenosylhomocysteinase.